A 293-amino-acid chain; its full sequence is Nucleotide-binding protein BCG9842_B5683 (293 aa).

An ATP-binding site is contributed by 14–21 (GMSGAGKT). 65–68 (DLRG) serves as a coordination point for GTP.

It belongs to the RapZ-like family.

Displays ATPase and GTPase activities. The chain is Nucleotide-binding protein BCG9842_B5683 from Bacillus cereus (strain G9842).